Here is a 786-residue protein sequence, read N- to C-terminus: Constitutive coactivator of peroxisome proliferator-activated receptor gamma (786 aa).

The interval 1–561 (MGVRGLQGFV…GTPSLEVLWL (561 aa)) is mediates transactivation of PPARG. Disordered regions lie at residues 371 to 413 (PNQE…KLPS) and 738 to 786 (HWDS…WRRY). A compositionally biased stretch (polar residues) spans 750 to 771 (QGYSSYRTDSTHGHSGQSWRNQ).

It belongs to the constitutive coactivator of PPAR-gamma family. Interacts with ESR1 and RXRA. Interacts with PPARG; in a ligand-independent manner. In terms of tissue distribution, ubiquitously expressed (at protein level).

It is found in the nucleus. Its function is as follows. Functions as a transactivator of PPARG and ESR1. Functions in adipogenesis through PPARG activation. This Mus musculus (Mouse) protein is Constitutive coactivator of peroxisome proliferator-activated receptor gamma (Fam120b).